The chain runs to 212 residues: uncharacterized protein (212 aa).

Disordered stretches follow at residues 1–148 and 168–190; these read MEKD…LNDL and EVVTDAKKEEKPSQMDVEDLSED. The segment covering 61–70 has biased composition (basic and acidic residues); sequence KELESEDQGK. Over residues 71–85 the composition is skewed to polar residues; the sequence is DPSSNAEDASCQKNL. Basic and acidic residues-rich tracts occupy residues 99–115, 124–144, and 168–180; these read LGHESGKQDPEREKSDL, EGEHADGGLQEAKEQEAESIK, and EVVTDAKKEEKPS.

This is an uncharacterized protein from Homo sapiens (Human).